The sequence spans 307 residues: tRNA dimethylallyltransferase (307 aa).

9 to 16 is an ATP binding site; the sequence is GPTAVGKT. Substrate is bound at residue 11–16; the sequence is TAVGKT. Residues 34-37 are interaction with substrate tRNA; sequence DSMQ.

Belongs to the IPP transferase family. In terms of assembly, monomer. It depends on Mg(2+) as a cofactor.

The catalysed reaction is adenosine(37) in tRNA + dimethylallyl diphosphate = N(6)-dimethylallyladenosine(37) in tRNA + diphosphate. In terms of biological role, catalyzes the transfer of a dimethylallyl group onto the adenine at position 37 in tRNAs that read codons beginning with uridine, leading to the formation of N6-(dimethylallyl)adenosine (i(6)A). This is tRNA dimethylallyltransferase from Limosilactobacillus fermentum (strain NBRC 3956 / LMG 18251) (Lactobacillus fermentum).